The following is a 778-amino-acid chain: Probable protein kinase DDB_G0291133 (778 aa).

The segment at 129 to 162 (LSINNNNNNNNNNGGYKIPSSVNKNSNNYNSNSN) is disordered. The Protein kinase domain occupies 177–462 (FDVVCKLGSG…LDQILLNENI (286 aa)). Residues 183 to 191 (LGSGSFSDV) and K206 contribute to the ATP site. D303 acts as the Proton acceptor in catalysis. Residues N308 and D321 each coordinate Mg(2+). Disordered regions lie at residues 478 to 509 (NIEN…DDNN), 562 to 697 (HFVR…GFYG), and 757 to 778 (SHPQ…QETN). Over residues 578–590 (SDEEEDDDDDDDS) the composition is skewed to acidic residues. Residues 599-651 (SLNNLNNSSSNIGISESNSNNSFSSILEENNESSSSSPLPSLSFSRRLSTSSL) show a composition bias toward low complexity. Polar residues predominate over residues 652-670 (VTTISPKPNFNTSGNKLFS). Residues 671–693 (NENNNSNNNNNNNNNNQNNNNNN) are compositionally biased toward low complexity. Basic and acidic residues predominate over residues 757–766 (SHPQESDKMS).

This sequence belongs to the protein kinase superfamily. Ser/Thr protein kinase family. WEE1 subfamily.

The catalysed reaction is L-seryl-[protein] + ATP = O-phospho-L-seryl-[protein] + ADP + H(+). It catalyses the reaction L-threonyl-[protein] + ATP = O-phospho-L-threonyl-[protein] + ADP + H(+). The polypeptide is Probable protein kinase DDB_G0291133 (Dictyostelium discoideum (Social amoeba)).